Here is a 940-residue protein sequence, read N- to C-terminus: Serine/threonine-protein phosphatase 1 regulatory subunit 10 (940 aa).

Positions 1-348 are interaction with TOX4; that stretch reads MGSGPIDPKE…EPAPPSEAMD (348 aa). The region spanning 73 to 147 is the TFIIS N-terminal domain; the sequence is KLLNNWLTYS…SDWMAVIRSQ (75 aa). Disordered regions lie at residues 147–211, 247–270, 304–400, and 533–905; these read QSST…FRST, SNVA…NTTP, KIKK…KSVT, and YVET…HGGD. Basic and acidic residues-rich tracts occupy residues 153-166 and 174-196; these read AEKD…EGKS and PLTE…EKPK. Residue Lys179 forms a Glycyl lysine isopeptide (Lys-Gly) (interchain with G-Cter in SUMO2) linkage. Thr256 is modified (phosphothreonine). Lys262 participates in a covalent cross-link: Glycyl lysine isopeptide (Lys-Gly) (interchain with G-Cter in SUMO2). Ser313 is modified (phosphoserine). Over residues 325–336 the composition is skewed to low complexity; sequence KTSTEPSTAKPS. Positions 357 to 433 are necessary for interaction with PPP1CA; it reads PPVEVPELMD…NKIKDFGEAA (77 aa). Phosphoserine is present on Ser382. The tract at residues 393 to 408 is necessary for interaction with PPP1CC; the sequence is GRKRKSVTWPEEGKLR. The PP1-binding motif motif lies at 394-423; that stretch reads RKRKSVTWPEEGKLREYFYFELDETERVNV. Phosphoserine; by PKA is present on Ser398. An interaction with WDR82 region spans residues 418–619; it reads TERVNVNKIK…IKQMLVPHGL (202 aa). Composition is skewed to gly residues over residues 540 to 551 and 565 to 579; these read GGSGGSPDGAGG and MGAG…GGGI. Ser545 carries the phosphoserine modification. Residues 583–595 are compositionally biased toward polar residues; that stretch reads EILTSIMGSPNSH. Position 591 is a phosphoserine (Ser591). Over residues 596-611 the composition is skewed to basic and acidic residues; sequence PSEELLKQPDYSDKIK. The segment covering 644 to 655 has biased composition (pro residues); that stretch reads PPGPGGPMPGPH. Residue Arg665 is modified to Omega-N-methylarginine. The span at 676–690 shows a compositional bias: low complexity; that stretch reads GDPFWDGPGDPMRGG. Omega-N-methylarginine is present on Arg693. Pro residues predominate over residues 714-723; it reads EPPPPPPPPF. Composition is skewed to gly residues over residues 726 to 764 and 790 to 845; these read ARGG…GMGN and SSMG…GSGG. Arg739 is modified (omega-N-methylarginine). Composition is skewed to basic and acidic residues over residues 862 to 886 and 894 to 903; these read PHDV…HDGP and RGHDGGHSHG. The C3H1-type zinc-finger motif lies at 906-934; the sequence is MSNRPVCRHFMMKGNCRYENNCAFYHPGV.

In terms of assembly, component of the PNUTS-PP1 complex (also named PTW/PP1 complex), composed of PPP1R10/PNUTS, TOX4, WDR82, and PPP1CA (or PPP1CB or PPP1CC). Phosphorylated on Ser-398 by PKA within the region necessary for interaction with PPP1CA.

The protein resides in the nucleus. It is found in the chromosome. Functionally, substrate-recognition component of the PNUTS-PP1 protein phosphatase complex, a protein phosphatase 1 (PP1) complex that promotes RNA polymerase II transcription pause-release, allowing transcription elongation. Promoter-proximal pausing by RNA polymerase II is a transcription halt following transcription initiation but prior to elongation, which acts as a checkpoint to control that transcripts are favorably configured for transcriptional elongation. The PNUTS-PP1 complex mediates the release of RNA polymerase II from promoter-proximal region of genes by catalyzing dephosphorylation of proteins involved in transcription, such as AFF4, CDK9, MEPCE, INTS12, NCBP1, POLR2M/GDOWN1 and SUPT6H. The PNUTS-PP1 complex also regulates RNA polymerase II transcription termination by mediating dephosphorylation of SUPT5H in termination zones downstream of poly(A) sites, thereby promoting deceleration of RNA polymerase II transcription. PNUTS-PP1 complex is also involved in the response to replication stress by mediating dephosphorylation of POLR2A at 'Ser-5' of the CTD, promoting RNA polymerase II degradation. The PNUTS-PP1 complex also plays a role in the control of chromatin structure and cell cycle progression during the transition from mitosis into interphase. PNUTS-PP1 complex mediates dephosphorylation of MYC, promoting MYC stability by preventing MYC ubiquitination by the SCF(FBXW7) complex. In addition to acts as a substrate-recognition component, PPP1R10/PNUTS also acts as a nuclear targeting subunit for the PNUTS-PP1 complex. In some context, PPP1R10/PNUTS also acts as an inhibitor of protein phosphatase 1 (PP1) activity by preventing access to substrates, such as RB. This Macaca mulatta (Rhesus macaque) protein is Serine/threonine-protein phosphatase 1 regulatory subunit 10 (PPP1R10).